A 225-amino-acid polypeptide reads, in one-letter code: NAD(P)H-quinone oxidoreductase subunit K, chloroplastic (225 aa).

Residues cysteine 43, cysteine 44, cysteine 108, and cysteine 139 each coordinate [4Fe-4S] cluster.

The protein belongs to the complex I 20 kDa subunit family. As to quaternary structure, NDH is composed of at least 16 different subunits, 5 of which are encoded in the nucleus. Requires [4Fe-4S] cluster as cofactor.

It is found in the plastid. The protein resides in the chloroplast thylakoid membrane. It carries out the reaction a plastoquinone + NADH + (n+1) H(+)(in) = a plastoquinol + NAD(+) + n H(+)(out). The catalysed reaction is a plastoquinone + NADPH + (n+1) H(+)(in) = a plastoquinol + NADP(+) + n H(+)(out). Its function is as follows. NDH shuttles electrons from NAD(P)H:plastoquinone, via FMN and iron-sulfur (Fe-S) centers, to quinones in the photosynthetic chain and possibly in a chloroplast respiratory chain. The immediate electron acceptor for the enzyme in this species is believed to be plastoquinone. Couples the redox reaction to proton translocation, and thus conserves the redox energy in a proton gradient. The sequence is that of NAD(P)H-quinone oxidoreductase subunit K, chloroplastic from Illicium oligandrum (Star anise).